A 178-amino-acid polypeptide reads, in one-letter code: Ribosome maturation factor RimP (178 aa).

This sequence belongs to the RimP family.

It is found in the cytoplasm. Required for maturation of 30S ribosomal subunits. This is Ribosome maturation factor RimP from Maricaulis maris (strain MCS10) (Caulobacter maris).